The primary structure comprises 325 residues: Probable isoaspartyl peptidase/L-asparaginase 2 (325 aa).

Residue threonine 195 is the Nucleophile of the active site. Substrate is bound by residues arginine 223–aspartate 226 and threonine 245–glycine 248.

This sequence belongs to the Ntn-hydrolase family. As to quaternary structure, heterotetramer of two alpha and two beta chains arranged as a dimer of alpha/beta heterodimers. Cleaved into an alpha and beta chain by autocatalysis; this activates the enzyme. The N-terminal residue of the beta subunit is responsible for the nucleophile hydrolase activity.

The enzyme catalyses Cleavage of a beta-linked Asp residue from the N-terminus of a polypeptide.. Acts in asparagine catabolism and also in the final steps of protein degradation via hydrolysis of a range of isoaspartyl dipeptides. The chain is Probable isoaspartyl peptidase/L-asparaginase 2 from Arabidopsis thaliana (Mouse-ear cress).